Reading from the N-terminus, the 402-residue chain is F-box protein At4g22390 (402 aa).

The F-box domain maps to 1–49 (MAECPTDLINEMFLRLRATTLVKCRVLSKPCFSLIDSPEFVSSHLRRRL).

This Arabidopsis thaliana (Mouse-ear cress) protein is F-box protein At4g22390.